We begin with the raw amino-acid sequence, 251 residues long: tRNA (guanine-N(7)-)-methyltransferase (251 aa).

Glu80, Glu105, Asp132, and Asp155 together coordinate S-adenosyl-L-methionine. Asp155 is an active-site residue. Substrate contacts are provided by residues Lys159, Asp191, and 228 to 231; that span reads TKFE.

The protein belongs to the class I-like SAM-binding methyltransferase superfamily. TrmB family.

The enzyme catalyses guanosine(46) in tRNA + S-adenosyl-L-methionine = N(7)-methylguanosine(46) in tRNA + S-adenosyl-L-homocysteine. Its pathway is tRNA modification; N(7)-methylguanine-tRNA biosynthesis. In terms of biological role, catalyzes the formation of N(7)-methylguanine at position 46 (m7G46) in tRNA. This is tRNA (guanine-N(7)-)-methyltransferase from Histophilus somni (strain 2336) (Haemophilus somnus).